The sequence spans 453 residues: Alpha-glucosidase (453 aa).

Position 3–69 (3–69 (TKIVLVGAGS…LPFIVSATTD (67 aa))) interacts with NAD(+). Substrate is bound at residue asparagine 149. Cysteine 171 contacts Mn(2+). Histidine 172 functions as the Proton donor in the catalytic mechanism. Histidine 201 contacts Mn(2+).

As to quaternary structure, homotetramer. It depends on Mn(2+) as a cofactor. The cofactor is Co(2+). Requires Ca(2+) as cofactor. Fe(2+) is required as a cofactor. Mg(2+) serves as cofactor. It depends on Sr(2+) as a cofactor. The cofactor is Ni(2+). Requires NAD(+) as cofactor.

It catalyses the reaction Hydrolysis of terminal, non-reducing (1-&gt;4)-linked alpha-D-glucose residues with release of alpha-D-glucose.. It functions in the pathway glycan degradation; palatinose degradation. Its activity is regulated as follows. Is inhibited by EDTA in vitro. Functionally, alpha-glucosidase with broad specificity. Hydrolyzes maltose, palatinose, maltulose, trehalose, trehalulose, turanose, leucrose, sucrose and maltitol. Is not active against alpha-galactosides, e.g. melibiose, and alpha-mannosides. Shows an obligate requirement for an O-alpha-glycosidic linkage, since it is not able to cleave beta-glycosidic bonds (cellobiose, gentiobiose, lactose, sophorose or laminaribiose). Cannot hydrolyze phosphorylated alpha-glucosides derivatives. Seems to be involved in the degradation of palatinose, a sucrose isomer that is formed as a reserve material under conditions of excess carbon availability, sequestered in a form unavailable to competitors such as fungi or the host plant, and whose consumption appears to be postponed until the preferentially metabolized carbon source (e.g. sucrose) is depleted. This chain is Alpha-glucosidase (palH), found in Erwinia rhapontici (Pectobacterium rhapontici).